The primary structure comprises 254 residues: Metallo-beta-lactamase type 2 (254 aa).

Positions Met-1 to Ala-27 are cleaved as a signal peptide. A Zn(2+)-binding site is contributed by Asp-99. Substrate-binding residues include Thr-135 and His-174. Zn(2+) is bound at residue Cys-193. Substrate is bound by residues Lys-196 and Asn-201. His-231 lines the Zn(2+) pocket.

This sequence belongs to the metallo-beta-lactamase superfamily. Class-B beta-lactamase family. As to quaternary structure, monomer. Zn(2+) serves as cofactor.

The protein localises to the periplasm. The enzyme catalyses a beta-lactam + H2O = a substituted beta-amino acid. Its activity is regulated as follows. Competitively inhibited by mercaptophosphonate and pyridine carboxylate derivatives. Also inhibited by the binding of a second zinc ion and by chelating agents such as EDTA. In terms of biological role, confers resistance to the different beta-lactams antibiotics (penicillin, cephalosporin and carbapenem) via the hydrolysis of the beta-lactam ring. It is able to hydrolyze penicillin and imipenem, but is much less active against cephalothin, cefotaxime, meropenem and ceftazidime. The protein is Metallo-beta-lactamase type 2 of Aeromonas hydrophila.